Reading from the N-terminus, the 174-residue chain is Streptothricin acetyltransferase (174 aa).

Residues 20–170 (FIVREVFDVH…AMYWYWFSGA (151 aa)) enclose the N-acetyltransferase domain.

It belongs to the acetyltransferase family. GNAT subfamily.

It catalyses the reaction streptothricin F + acetyl-CoA = N(beta)-acetylstreptothricin F + CoA + H(+). Its function is as follows. Involved in resistance to streptothricin, a broad-spectrum antibiotic produced by streptomycetes. Detoxifies streptothricin via acetylation of the beta amino group of the first beta-lysyl moiety of streptothricin. The polypeptide is Streptothricin acetyltransferase (sat-1) (Escherichia coli).